A 98-amino-acid polypeptide reads, in one-letter code: NADH-ubiquinone oxidoreductase chain 4L (98 aa).

A run of 3 helical transmembrane segments spans residues 1-21, 29-49, and 59-79; these read MSIV…GTLL, SLMC…LISL, and VPLI…ALLV.

It belongs to the complex I subunit 4L family. As to quaternary structure, core subunit of respiratory chain NADH dehydrogenase (Complex I) which is composed of 45 different subunits.

Its subcellular location is the mitochondrion inner membrane. It carries out the reaction a ubiquinone + NADH + 5 H(+)(in) = a ubiquinol + NAD(+) + 4 H(+)(out). Its function is as follows. Core subunit of the mitochondrial membrane respiratory chain NADH dehydrogenase (Complex I) which catalyzes electron transfer from NADH through the respiratory chain, using ubiquinone as an electron acceptor. Part of the enzyme membrane arm which is embedded in the lipid bilayer and involved in proton translocation. This chain is NADH-ubiquinone oxidoreductase chain 4L (MT-ND4L), found in Hemiechinus auritus (Long-eared hedgehog).